The chain runs to 1607 residues: Abnormal cell migration protein 38 (1607 aa).

12 disordered regions span residues 14–52 (EFNKRADSPRAAGNYDFESGNIDNIPLNDDGPLSPSQDF), 67–93 (RLSPNGGLNREDQQPGPSGNNDGQYHV), 167–222 (STSY…AAQA), 326–425 (GSSA…PPSQ), 459–478 (SPNTNGPSSQLQRPQSGMDQ), 549–594 (MVHR…QHSY), 845–931 (YDEN…PETE), 1017–1061 (SVQV…DYDM), 1141–1241 (EPSP…VTPK), 1319–1378 (ETPN…KGQL), 1392–1445 (FANV…PQAV), and 1517–1607 (KVKT…STDP). Composition is skewed to polar residues over residues 81–93 (PGPSGNNDGQYHV) and 179–191 (PSGNSSSQINHQQ). Residues 195–205 (VPQVQQQPAKP) show a composition bias toward low complexity. Over residues 206–218 (KTTKKRPPPKKKT) the composition is skewed to basic residues. The segment covering 327–341 (SSASSSAQPSQPAKK) has biased composition (low complexity). 2 stretches are compositionally biased toward polar residues: residues 349–371 (VPNTAKNLAQNQQIMPPQAQITP) and 379–425 (PTTT…PPSQ). The segment covering 585 to 594 (NSHSQSQHSY) has biased composition (low complexity). Residues 858-871 (EEPESESESEPEAE) are compositionally biased toward acidic residues. Composition is skewed to basic and acidic residues over residues 872–886 (PEPKKDNFAEPEPAR) and 907–917 (YRNESESTFDW). 3 stretches are compositionally biased toward low complexity: residues 1333-1354 (PNIPSTSTSIPPASTVVSSVSV), 1395-1419 (VPSSKPSTSSAVSATPSTSSAVSAK), and 1584-1601 (LLGTSNMNSSTNGSSSGL).

As to expression, expressed in gonad distal tip cells and gonad sheath cells.

Its subcellular location is the nucleus. The protein localises to the cytoplasm. Functionally, during gonad development, involved in distal tip cell (DTC) migration from the dorsal side of the hermaphrodite body to the midbody which allows for the formation of gonad arms. Role in gonad DTC migration may be in association with integrin related proteins ina-1 and mig-15. This Caenorhabditis elegans protein is Abnormal cell migration protein 38.